The following is a 163-amino-acid chain: S-ribosylhomocysteine lyase (163 aa).

Residues His54, His58, and Cys128 each coordinate Fe cation.

The protein belongs to the LuxS family. Homodimer. Fe cation is required as a cofactor.

It carries out the reaction S-(5-deoxy-D-ribos-5-yl)-L-homocysteine = (S)-4,5-dihydroxypentane-2,3-dione + L-homocysteine. Its function is as follows. Involved in the synthesis of autoinducer 2 (AI-2) which is secreted by bacteria and is used to communicate both the cell density and the metabolic potential of the environment. The regulation of gene expression in response to changes in cell density is called quorum sensing. Catalyzes the transformation of S-ribosylhomocysteine (RHC) to homocysteine (HC) and 4,5-dihydroxy-2,3-pentadione (DPD). The chain is S-ribosylhomocysteine lyase from Wolinella succinogenes (strain ATCC 29543 / DSM 1740 / CCUG 13145 / JCM 31913 / LMG 7466 / NCTC 11488 / FDC 602W) (Vibrio succinogenes).